A 592-amino-acid polypeptide reads, in one-letter code: Beta-xylosidase (592 aa).

Positions 1–19 (MYLNACRALTLISVLSLLA) are cleaved as a signal peptide. Cysteine 20 is lipidated: N-palmitoyl cysteine. Cysteine 20 is lipidated: S-diacylglycerol cysteine.

It belongs to the glycosyl hydrolase 43 family.

Its subcellular location is the cell outer membrane. In terms of biological role, xylosidase involved in ulvan degradation. Ulvan is the main polysaccharide component of the Ulvales (green seaweed) cell wall. It is composed of disaccharide building blocks comprising 3-sulfated rhamnose (Rha3S) linked to D-glucuronic acid (GlcA), L-iduronic acid (IduA), or D-xylose (Xyl). Beta-xylosidase converts Xyl-Rha3S, a product of alpha-L-rhamnosidase acting on Rha-Xyl-Rha3S oligosaccharides, further to Xyl and Rha3S. This Formosa agariphila (strain DSM 15362 / KCTC 12365 / LMG 23005 / KMM 3901 / M-2Alg 35-1) protein is Beta-xylosidase.